A 491-amino-acid chain; its full sequence is Ketol-acid reductoisomerase (NADP(+)) (491 aa).

Residues 15–208 form the KARI N-terminal Rossmann domain; sequence AQLGTCRFME…GGHRAGVLES (194 aa). Residues 45-48, Arg68, Arg76, Ser78, and 108-110 contribute to the NADP(+) site; these read CGAQ and DKQ. His132 is an active-site residue. Gly158 is an NADP(+) binding site. KARI C-terminal knotted domains follow at residues 209–353 and 354–486; these read SFVA…KEQE and YFDK…MTAM. Asp217, Glu221, Glu389, and Glu393 together coordinate Mg(2+). Residue Ser414 participates in substrate binding.

The protein belongs to the ketol-acid reductoisomerase family. Mg(2+) serves as cofactor.

The enzyme catalyses (2R)-2,3-dihydroxy-3-methylbutanoate + NADP(+) = (2S)-2-acetolactate + NADPH + H(+). It catalyses the reaction (2R,3R)-2,3-dihydroxy-3-methylpentanoate + NADP(+) = (S)-2-ethyl-2-hydroxy-3-oxobutanoate + NADPH + H(+). It participates in amino-acid biosynthesis; L-isoleucine biosynthesis; L-isoleucine from 2-oxobutanoate: step 2/4. It functions in the pathway amino-acid biosynthesis; L-valine biosynthesis; L-valine from pyruvate: step 2/4. In terms of biological role, involved in the biosynthesis of branched-chain amino acids (BCAA). Catalyzes an alkyl-migration followed by a ketol-acid reduction of (S)-2-acetolactate (S2AL) to yield (R)-2,3-dihydroxy-isovalerate. In the isomerase reaction, S2AL is rearranged via a Mg-dependent methyl migration to produce 3-hydroxy-3-methyl-2-ketobutyrate (HMKB). In the reductase reaction, this 2-ketoacid undergoes a metal-dependent reduction by NADPH to yield (R)-2,3-dihydroxy-isovalerate. This is Ketol-acid reductoisomerase (NADP(+)) from Christiangramia forsetii (strain DSM 17595 / CGMCC 1.15422 / KT0803) (Gramella forsetii).